The sequence spans 86 residues: Small ribosomal subunit protein bS20 (86 aa).

Belongs to the bacterial ribosomal protein bS20 family.

Binds directly to 16S ribosomal RNA. This Paenarthrobacter aurescens (strain TC1) protein is Small ribosomal subunit protein bS20.